The primary structure comprises 265 residues: Tryptophan synthase alpha chain (265 aa).

Active-site proton acceptor residues include Glu47 and Asp58.

This sequence belongs to the TrpA family. Tetramer of two alpha and two beta chains.

It carries out the reaction (1S,2R)-1-C-(indol-3-yl)glycerol 3-phosphate + L-serine = D-glyceraldehyde 3-phosphate + L-tryptophan + H2O. It participates in amino-acid biosynthesis; L-tryptophan biosynthesis; L-tryptophan from chorismate: step 5/5. Its function is as follows. The alpha subunit is responsible for the aldol cleavage of indoleglycerol phosphate to indole and glyceraldehyde 3-phosphate. This is Tryptophan synthase alpha chain from Methanoregula boonei (strain DSM 21154 / JCM 14090 / 6A8).